A 792-amino-acid chain; its full sequence is Phenylalanine--tRNA ligase beta subunit (792 aa).

The tRNA-binding domain maps to 39–150 (GDEITNVVTG…ENTPIGKDIK (112 aa)). Positions 404–479 (SEPNIVEVDY…RIYGYNKVPS (76 aa)) constitute a B5 domain. Mg(2+) contacts are provided by D457, D463, E466, and E467. The 94-residue stretch at 699-792 (PKFPTVTRDI…LEHVLGAELR (94 aa)) folds into the FDX-ACB domain.

This sequence belongs to the phenylalanyl-tRNA synthetase beta subunit family. Type 1 subfamily. As to quaternary structure, tetramer of two alpha and two beta subunits. The cofactor is Mg(2+).

The protein localises to the cytoplasm. It catalyses the reaction tRNA(Phe) + L-phenylalanine + ATP = L-phenylalanyl-tRNA(Phe) + AMP + diphosphate + H(+). This chain is Phenylalanine--tRNA ligase beta subunit, found in Clostridium acetobutylicum (strain ATCC 824 / DSM 792 / JCM 1419 / IAM 19013 / LMG 5710 / NBRC 13948 / NRRL B-527 / VKM B-1787 / 2291 / W).